The primary structure comprises 249 residues: Putative S-adenosyl-L-methionine-dependent methyltransferase Mkms_0592 (249 aa).

S-adenosyl-L-methionine is bound by residues aspartate 111 and aspartate 141–leucine 142.

Belongs to the UPF0677 family.

In terms of biological role, exhibits S-adenosyl-L-methionine-dependent methyltransferase activity. This is Putative S-adenosyl-L-methionine-dependent methyltransferase Mkms_0592 from Mycobacterium sp. (strain KMS).